The chain runs to 339 residues: Methylthioribose-1-phosphate isomerase (339 aa).

Substrate contacts are provided by residues 49–51, arginine 86, and glutamine 187; that span reads RGA. The active-site Proton donor is aspartate 228. 238 to 239 provides a ligand contact to substrate; the sequence is NK.

This sequence belongs to the eIF-2B alpha/beta/delta subunits family. MtnA subfamily.

The enzyme catalyses 5-(methylsulfanyl)-alpha-D-ribose 1-phosphate = 5-(methylsulfanyl)-D-ribulose 1-phosphate. Its pathway is amino-acid biosynthesis; L-methionine biosynthesis via salvage pathway; L-methionine from S-methyl-5-thio-alpha-D-ribose 1-phosphate: step 1/6. In terms of biological role, catalyzes the interconversion of methylthioribose-1-phosphate (MTR-1-P) into methylthioribulose-1-phosphate (MTRu-1-P). The chain is Methylthioribose-1-phosphate isomerase from Cronobacter sakazakii (strain ATCC BAA-894) (Enterobacter sakazakii).